We begin with the raw amino-acid sequence, 502 residues long: ATP synthase subunit alpha (502 aa).

ATP is bound at residue 169 to 176; sequence GDRQTGKT.

The protein belongs to the ATPase alpha/beta chains family. As to quaternary structure, F-type ATPases have 2 components, CF(1) - the catalytic core - and CF(0) - the membrane proton channel. CF(1) has five subunits: alpha(3), beta(3), gamma(1), delta(1), epsilon(1). CF(0) has three main subunits: a(1), b(2) and c(9-12). The alpha and beta chains form an alternating ring which encloses part of the gamma chain. CF(1) is attached to CF(0) by a central stalk formed by the gamma and epsilon chains, while a peripheral stalk is formed by the delta and b chains.

It is found in the cell membrane. It carries out the reaction ATP + H2O + 4 H(+)(in) = ADP + phosphate + 5 H(+)(out). Produces ATP from ADP in the presence of a proton gradient across the membrane. The alpha chain is a regulatory subunit. The polypeptide is ATP synthase subunit alpha (Streptococcus pyogenes serotype M12 (strain MGAS9429)).